The chain runs to 135 residues: RxLR effector protein PITG_02860 (135 aa).

Positions 1–18 are cleaved as a signal peptide; sequence MRLAFLLLAVSHFICGNA. Residues 48-64 carry the RxLR-dEER motif; that stretch reads RKLLRTDERLSEANEER. The NRL1-binding domain stretch occupies residues 126-135; sequence LKDPQAFRGP.

It belongs to the RxLR effector family. Interacts with host ubiquitin E3 ligase NRL1.

Its subcellular location is the secreted. The protein localises to the host cytoplasm. The protein resides in the host nucleus. It is found in the host nucleoplasm. Functionally, effector that promotes P.infestans virulence and suppresses pattern-triggered immunity (PTI). Interacts with the host ubiquitin E3 ligase NRL1 and enhances the association between NRL1 and SWAP70 to promote proteasome-mediated degradation of SWAP70, which results in the suppression of immunity. The polypeptide is RxLR effector protein PITG_02860 (Phytophthora infestans (strain T30-4) (Potato late blight agent)).